The primary structure comprises 234 residues: Glucosamine-6-phosphate deaminase (234 aa).

The active-site Proton acceptor; for enolization step is the Asp-62. Residue Asn-128 is the For ring-opening step of the active site. His-130 (proton acceptor; for ring-opening step) is an active-site residue. Glu-135 functions as the For ring-opening step in the catalytic mechanism.

It belongs to the glucosamine/galactosamine-6-phosphate isomerase family. NagB subfamily.

It catalyses the reaction alpha-D-glucosamine 6-phosphate + H2O = beta-D-fructose 6-phosphate + NH4(+). It functions in the pathway amino-sugar metabolism; N-acetylneuraminate degradation; D-fructose 6-phosphate from N-acetylneuraminate: step 5/5. Catalyzes the reversible isomerization-deamination of glucosamine 6-phosphate (GlcN6P) to form fructose 6-phosphate (Fru6P) and ammonium ion. The chain is Glucosamine-6-phosphate deaminase from Lactobacillus delbrueckii subsp. bulgaricus (strain ATCC 11842 / DSM 20081 / BCRC 10696 / JCM 1002 / NBRC 13953 / NCIMB 11778 / NCTC 12712 / WDCM 00102 / Lb 14).